Here is a 314-residue protein sequence, read N- to C-terminus: Homoserine O-acetyltransferase (314 aa).

C142 serves as the catalytic Acyl-thioester intermediate. Substrate-binding residues include K163 and S192. The active-site Proton acceptor is H235. The active site involves E237. Residue R249 participates in substrate binding.

This sequence belongs to the MetA family.

The protein resides in the cytoplasm. The enzyme catalyses L-homoserine + acetyl-CoA = O-acetyl-L-homoserine + CoA. The protein operates within amino-acid biosynthesis; L-methionine biosynthesis via de novo pathway; O-acetyl-L-homoserine from L-homoserine: step 1/1. Functionally, transfers an acetyl group from acetyl-CoA to L-homoserine, forming acetyl-L-homoserine. In Streptococcus pneumoniae (strain Taiwan19F-14), this protein is Homoserine O-acetyltransferase.